A 328-amino-acid chain; its full sequence is DNA-directed RNA polymerase subunit alpha (328 aa).

Positions 1–234 (MQGSVTEFLK…EQLDAFVDLR (234 aa)) are alpha N-terminal domain (alpha-NTD). The alpha C-terminal domain (alpha-CTD) stretch occupies residues 248 to 328 (FDPILLRPVD…NWPPASIAED (81 aa)).

Belongs to the RNA polymerase alpha chain family. Homodimer. The RNAP catalytic core consists of 2 alpha, 1 beta, 1 beta' and 1 omega subunit. When a sigma factor is associated with the core the holoenzyme is formed, which can initiate transcription.

The enzyme catalyses RNA(n) + a ribonucleoside 5'-triphosphate = RNA(n+1) + diphosphate. Its function is as follows. DNA-dependent RNA polymerase catalyzes the transcription of DNA into RNA using the four ribonucleoside triphosphates as substrates. This Haemophilus influenzae (strain PittEE) protein is DNA-directed RNA polymerase subunit alpha.